We begin with the raw amino-acid sequence, 168 residues long: Large ribosomal subunit protein uL10 (168 aa).

This sequence belongs to the universal ribosomal protein uL10 family. As to quaternary structure, part of the ribosomal stalk of the 50S ribosomal subunit. The N-terminus interacts with L11 and the large rRNA to form the base of the stalk. The C-terminus forms an elongated spine to which L12 dimers bind in a sequential fashion forming a multimeric L10(L12)X complex.

Forms part of the ribosomal stalk, playing a central role in the interaction of the ribosome with GTP-bound translation factors. This is Large ribosomal subunit protein uL10 from Ralstonia nicotianae (strain ATCC BAA-1114 / GMI1000) (Ralstonia solanacearum).